The sequence spans 651 residues: MSGKFVRASKYRHVFGQAAKKELQYEKLKVTNNAWDSNLLKTNGKFIAVNWNASGGGAFAVIPIEEVGKAPDQVPLFRGHTAQVLDTDFDPFNDHRIASGSDDSKIGIWDIPENYKFHDHVDEDGEPIDIKPVKFLTGHARKVGHVLYHPVAENVLASSSGDYTVKLWNVETGKDMITLKHPDMVTSMSFSYDGNYLATVARDKKLRVWNIREEKIVSEGPAHTGAKNQRVVWLGNSDRLATTGFSKLSDRQIGIWDAFNIEKGDLGGFYTVDQSSGILMPFYDEGNKILYLVGKGDGNIRYYEFQNDELFELSEFQSTEAQRGFAVAPKRMVNVKENEVLKGFKTVVDQRIEPVSFFVPRRSEEFQEDIYPDAPSNKPALTAEEWFSGKSVEGPILVSMRSIYDGSAPSFHEAKRPQQPTTQETALEEKKEQPKVEKPISESEKEVKQEAPKSPSPLKSASSSSTINHVLKEDNSINKLLKKSSDIDQVNNAEDPSRDTSGWEEADDEPAPIKIETPVTPTETKKDRTPKVEPSKELKPEPVSIATDRKQEQSLPQEEKSSEKTKSPEQEKSATPPSSITAAKTAITASSKEEPSAARTSPKSLGLKKSVEKLSTLVLQLEDVVDKLTKANLDKDERLLKLEQKIGELSK.

4 WD repeats span residues 79-110 (GHTA…GIWD), 138-169 (GHAR…KLWN), 180-210 (KHPD…RVWN), and 226-257 (AKNQ…GIWD). Residues 408-609 (APSFHEAKRP…TSPKSLGLKK (202 aa)) are disordered. A compositionally biased stretch (basic and acidic residues) spans 427 to 451 (LEEKKEQPKVEKPISESEKEVKQEA). Residues serine 441, serine 454, and serine 456 each carry the phosphoserine modification. Low complexity predominate over residues 452-465 (PKSPSPLKSASSSS). Phosphothreonine is present on residues threonine 517 and threonine 529. Basic and acidic residues-rich tracts occupy residues 523-540 (ETKK…ELKP) and 547-572 (TDRK…EQEK). Phosphoserine occurs at positions 573 and 579. Residues 578-590 (SSITAAKTAITAS) are compositionally biased toward low complexity. Positions 618-650 (VLQLEDVVDKLTKANLDKDERLLKLEQKIGELS) form a coiled coil.

The protein belongs to the WD repeat coronin family. In terms of assembly, binds to F-actin.

The sequence is that of Coronin-like protein (CRN1) from Saccharomyces cerevisiae (strain ATCC 204508 / S288c) (Baker's yeast).